The sequence spans 78 residues: Small venom protein 2 (78 aa).

Residues 1-19 (MKFIVLLGALLALLVAVSA) form the signal peptide. Positions 20 to 42 (DRIAREAPEMESVDEAVLTRQAR) are excised as a propeptide.

In terms of tissue distribution, expressed by the venom gland.

It is found in the secreted. In Pimpla hypochondriaca (Parasitoid wasp), this protein is Small venom protein 2.